Consider the following 109-residue polypeptide: uncharacterized protein (109 aa).

Residues 1-26 (MTPRSLPRYGNSSRRKSFPMHRPSNV) form a disordered region.

This is an uncharacterized protein from Mycobacterium bovis (strain ATCC BAA-935 / AF2122/97).